Consider the following 217-residue polypeptide: Large ribosomal subunit protein uL3 (217 aa).

The interval 134–154 (DATHGNSLSHRAPGSIGQCQT) is disordered. Position 153 is an N5-methylglutamine (Gln-153).

It belongs to the universal ribosomal protein uL3 family. As to quaternary structure, part of the 50S ribosomal subunit. Forms a cluster with proteins L14 and L19. Post-translationally, methylated by PrmB.

One of the primary rRNA binding proteins, it binds directly near the 3'-end of the 23S rRNA, where it nucleates assembly of the 50S subunit. The protein is Large ribosomal subunit protein uL3 of Coxiella burnetii (strain Dugway 5J108-111).